The sequence spans 293 residues: Dehydrodolichyl diphosphate synthase complex subunit NUS1 (293 aa).

3 helical membrane-spanning segments follow: residues 1–23 (MTGL…RTLT), 35–56 (WIWR…GFTL), and 117–135 (IASL…ISVY). Residues Asn144 and Asn271 are each glycosylated (N-linked (GlcNAc...) asparagine). The RXG motif; crucial for prenyltransferase activity signature appears at 290–292 (RLG). Leu291 and Gly292 together coordinate isopentenyl diphosphate.

It belongs to the UPP synthase family. The active dehydrodolichyl diphosphate synthase complex is a heterotetramer composed of a dimer of heterodimer of DHDDS and NUS1. Interacts with NPC2. It depends on Mg(2+) as a cofactor.

The protein localises to the endoplasmic reticulum membrane. The enzyme catalyses n isopentenyl diphosphate + (2E,6E)-farnesyl diphosphate = a di-trans,poly-cis-polyprenyl diphosphate + n diphosphate. The protein operates within protein modification; protein glycosylation. Its pathway is lipid metabolism. With respect to regulation, activated by phospholipids including cardiolipin, phosphatidylcholine, phosphatidylethanolamine, phosphatidylinositol and phosphatidylserine. Functionally, with DHDDS, forms the dehydrodolichyl diphosphate synthase (DDS) complex, an essential component of the dolichol monophosphate (Dol-P) biosynthetic machinery. Both subunits contribute to enzymatic activity, i.e. condensation of multiple copies of isopentenyl pyrophosphate (IPP) to farnesyl pyrophosphate (FPP) to produce dehydrodolichyl diphosphate (Dedol-PP), a precursor of dolichol phosphate which is utilized as a sugar carrier in protein glycosylation in the endoplasmic reticulum (ER). Synthesizes long-chain polyprenols, mostly of C95 and C100 chain length. Regulates the glycosylation and stability of nascent NPC2, thereby promoting trafficking of LDL-derived cholesterol. Acts as a specific receptor for the N-terminus of Nogo-B, a neural and cardiovascular regulator. The sequence is that of Dehydrodolichyl diphosphate synthase complex subunit NUS1 from Homo sapiens (Human).